Consider the following 375-residue polypeptide: Alcohol dehydrogenase B (375 aa).

7 residues coordinate Zn(2+): C40, H62, C92, C95, C98, C106, and C169.

It belongs to the zinc-containing alcohol dehydrogenase family. The cofactor is Zn(2+).

It localises to the cytoplasm. It catalyses the reaction a primary alcohol + NAD(+) = an aldehyde + NADH + H(+). The catalysed reaction is a secondary alcohol + NAD(+) = a ketone + NADH + H(+). This Mycobacterium bovis (strain ATCC BAA-935 / AF2122/97) protein is Alcohol dehydrogenase B (adhB).